The sequence spans 403 residues: S-adenosylmethionine synthase (403 aa).

Histidine 16 lines the ATP pocket. Aspartate 18 lines the Mg(2+) pocket. Glutamate 44 provides a ligand contact to K(+). The L-methionine site is built by glutamate 57 and glutamine 100. Residues 100–110 form a flexible loop region; it reads QSPDIAQGVDR. Positions 106 to 126 are disordered; that stretch reads QGVDRSYESRSGSASTDAHDL. Residues 176-178, 248-249, aspartate 257, 263-264, alanine 280, and lysine 284 contribute to the ATP site; these read DGK, KF, and RK. Aspartate 257 contributes to the L-methionine binding site. Lysine 288 contacts L-methionine.

The protein belongs to the AdoMet synthase family. As to quaternary structure, homotetramer; dimer of dimers. Mg(2+) is required as a cofactor. Requires K(+) as cofactor.

Its subcellular location is the cytoplasm. It catalyses the reaction L-methionine + ATP + H2O = S-adenosyl-L-methionine + phosphate + diphosphate. It functions in the pathway amino-acid biosynthesis; S-adenosyl-L-methionine biosynthesis; S-adenosyl-L-methionine from L-methionine: step 1/1. Functionally, catalyzes the formation of S-adenosylmethionine (AdoMet) from methionine and ATP. The overall synthetic reaction is composed of two sequential steps, AdoMet formation and the subsequent tripolyphosphate hydrolysis which occurs prior to release of AdoMet from the enzyme. This chain is S-adenosylmethionine synthase, found in Clavibacter sepedonicus (Clavibacter michiganensis subsp. sepedonicus).